The following is a 203-amino-acid chain: Glycerol-3-phosphate acyltransferase (203 aa).

5 helical membrane passes run 5 to 25 (IYIA…GLIL), 55 to 75 (LAAA…IVAA), 84 to 104 (IAAN…LFPV), 118 to 138 (IGVL…MWLA), and 159 to 179 (IFLW…LTLL).

It belongs to the PlsY family. Probably interacts with PlsX.

It is found in the cell inner membrane. It catalyses the reaction an acyl phosphate + sn-glycerol 3-phosphate = a 1-acyl-sn-glycero-3-phosphate + phosphate. Its pathway is lipid metabolism; phospholipid metabolism. Its function is as follows. Catalyzes the transfer of an acyl group from acyl-phosphate (acyl-PO(4)) to glycerol-3-phosphate (G3P) to form lysophosphatidic acid (LPA). This enzyme utilizes acyl-phosphate as fatty acyl donor, but not acyl-CoA or acyl-ACP. In Rhodopseudomonas palustris (strain ATCC BAA-98 / CGA009), this protein is Glycerol-3-phosphate acyltransferase.